Here is a 378-residue protein sequence, read N- to C-terminus: Erythronate-4-phosphate dehydrogenase (378 aa).

The substrate site is built by Ser45 and Thr66. The NAD(+) site is built by Asp146 and Thr175. Arg208 is an active-site residue. Residue Asp232 participates in NAD(+) binding. Glu237 is a catalytic residue. Catalysis depends on His254, which acts as the Proton donor. Gly257 contributes to the NAD(+) binding site. Tyr258 lines the substrate pocket.

The protein belongs to the D-isomer specific 2-hydroxyacid dehydrogenase family. PdxB subfamily. In terms of assembly, homodimer.

The protein resides in the cytoplasm. The catalysed reaction is 4-phospho-D-erythronate + NAD(+) = (R)-3-hydroxy-2-oxo-4-phosphooxybutanoate + NADH + H(+). It participates in cofactor biosynthesis; pyridoxine 5'-phosphate biosynthesis; pyridoxine 5'-phosphate from D-erythrose 4-phosphate: step 2/5. Functionally, catalyzes the oxidation of erythronate-4-phosphate to 3-hydroxy-2-oxo-4-phosphonooxybutanoate. This chain is Erythronate-4-phosphate dehydrogenase, found in Enterobacter sp. (strain 638).